The primary structure comprises 209 residues: MTYLYNFFFFFFFFFSRGKAELIRLIFAYLQVKYTDIRFGVNGDAFAEFNNFKKEKEIPFNQVPILEIGGLILAQSQAIVRYLSKKYNISGNGELNEFYADMIFCGVQDIHYKFNNTNLFKQNETTFLNEELPKWSGYFEKLLQKNNTNYFVGDTITYADLAVFNLYDDIESKYPNCLKNFPLLKAHIELISNIPNIKHYIANRKESVY.

One can recognise a GST N-terminal domain in the interval 7 to 91 (FFFFFFFFFS…YLSKKYNISG (85 aa)). Glutathione-binding positions include 62–63 (QV), 75–76 (QS), Asp109, Lys121, and Thr125. Residues 93–209 (GELNEFYADM…YIANRKESVY (117 aa)) enclose the GST C-terminal domain.

This sequence belongs to the GST superfamily. In terms of assembly, homodimer. In the absence of ligands two homodimers may interact to form a tetramer.

The catalysed reaction is RX + glutathione = an S-substituted glutathione + a halide anion + H(+). Functionally, conjugation of reduced glutathione to a wide number of exogenous and endogenous hydrophobic electrophiles. May also function as a storage protein or ligandin for parasitotoxic ferriprotoporphyrin IX (hemin). The chain is Glutathione S-transferase from Plasmodium yoelii yoelii.